Here is a 366-residue protein sequence, read N- to C-terminus: Septin-1 (366 aa).

The Septin-type G domain maps to 22–295 (KGFDFTLMVA…EGYRARCLQS (274 aa)). The G1 motif stretch occupies residues 32–39 (GESGLGKS). Residues 32-39 (GESGLGKS), Thr66, Gly92, and 171-179 (KADALMPRE) each bind GTP. Residues 89-92 (DTPG) form a G3 motif region. Positions 170–173 (GKAD) are G4 motif. The residue at position 206 (Ser206) is a Phosphoserine. GTP is bound by residues Gly229 and Arg244. Ser247 carries the post-translational modification Phosphoserine. At Thr250 the chain carries Phosphothreonine. 2 positions are modified to phosphoserine; by AURKB: Ser306 and Ser314. The interval 347-366 (EKMQAQMQQSQAQGEQSDVL) is disordered. The span at 349–366 (MQAQMQQSQAQGEQSDVL) shows a compositional bias: low complexity.

The protein belongs to the TRAFAC class TrmE-Era-EngA-EngB-Septin-like GTPase superfamily. Septin GTPase family. As to quaternary structure, septins polymerize into heterooligomeric protein complexes that form filaments, and can associate with cellular membranes, actin filaments and microtubules. GTPase activity is required for filament formation. Interacts with AURKB.

Its subcellular location is the cytoplasm. It localises to the cytoskeleton. The protein localises to the microtubule organizing center. It is found in the centrosome. The protein resides in the midbody. Functionally, filament-forming cytoskeletal GTPase. May play a role in cytokinesis (Potential). This chain is Septin-1, found in Mus musculus (Mouse).